A 341-amino-acid chain; its full sequence is MVFENDCRMYEKKYPEENELVMVRIESIGDMGVYVSLLEYNNIEGMILLSEISRRRIRSINKLVRVGKTEAVVVVRVDKDKGYIDLSKRRVTPEEYAQCEERFHKSKAVHGIVRYVATKLSTEDNVVKTKHLYTKFVWPLYTKYGHAYEAFKLSITEPSVFNGFDIAENERKVLMETIIQKLKPQPHKVRADLEITCYDYEGIDAIKHAITASQNHALSVLKAPEDGKFDEKAFGVVTIKLVAPPLYVMVGTFDEKEKGLSMVGQCVDVLSEEITKKNGNLTIKAAPRIVGAVDDQELRDLMEQLEVENQDGDGEEHEDDDDDDDDEEEEEKPKEKKSSRK.

Residues 18 to 89 (NELVMVRIES…DKGYIDLSKR (72 aa)) enclose the S1 motif domain. Residues 301 to 341 (LMEQLEVENQDGDGEEHEDDDDDDDDEEEEEKPKEKKSSRK) are disordered. The segment covering 303-330 (EQLEVENQDGDGEEHEDDDDDDDDEEEE) has biased composition (acidic residues). Over residues 331–341 (EKPKEKKSSRK) the composition is skewed to basic and acidic residues.

The protein belongs to the eIF-2-alpha family. In terms of assembly, eukaryotic translation initiation factor 2 eIF2 is a heterotrimeric complex composed of an alpha, a beta and a gamma subunit.

It localises to the cytoplasm. The protein localises to the cytosol. Its function is as follows. eIF-2 functions in the early steps of protein synthesis by forming a ternary complex with GTP and initiator tRNA. This complex binds to a 40S ribosomal subunit, followed by mRNA binding to form a 43S pre-initiation complex. Junction of the 60S ribosomal subunit to form the 80S initiation complex is preceded by hydrolysis of the GTP bound to eIF-2 and release of an eIF-2-GDP binary complex. In order for eIF-2 to recycle and catalyze another round of initiation, the GDP bound to eIF-2 must exchange with GTP by way of a reaction catalyzed by eIF2B. The sequence is that of Eukaryotic translation initiation factor 2 subunit 1 (eif2s1) from Dictyostelium discoideum (Social amoeba).